The sequence spans 338 residues: UDP-glucose 4-epimerase (338 aa).

Residues 11 to 12, 31 to 36, 58 to 59, 80 to 84, Asn99, Ser124, Tyr149, Lys153, and Phe178 each bind NAD(+); these read YI, DNLCNS, DI, and FAGLK. Ser124 and Tyr149 together coordinate substrate. The Proton acceptor role is filled by Tyr149. Residues Asn179, 199 to 200, 216 to 218, Arg231, and 292 to 295 contribute to the substrate site; these read NL, SVF, and RPGD.

Belongs to the NAD(P)-dependent epimerase/dehydratase family. In terms of assembly, homodimer. Requires NAD(+) as cofactor.

It catalyses the reaction UDP-alpha-D-glucose = UDP-alpha-D-galactose. Its pathway is carbohydrate metabolism; galactose metabolism. Functionally, involved in the metabolism of galactose. Catalyzes the conversion of UDP-galactose (UDP-Gal) to UDP-glucose (UDP-Glc) through a mechanism involving the transient reduction of NAD. In Pasteurella multocida (strain Pm70), this protein is UDP-glucose 4-epimerase (galE).